The following is a 229-amino-acid chain: Flagellar L-ring protein 1 (229 aa).

The signal sequence occupies residues 1-18; sequence MYLRKISAPLMTMLLLNG. The N-palmitoyl cysteine moiety is linked to residue Cys19. The S-diacylglycerol cysteine moiety is linked to residue Cys19.

The protein belongs to the FlgH family. As to quaternary structure, the basal body constitutes a major portion of the flagellar organelle and consists of four rings (L,P,S, and M) mounted on a central rod.

The protein localises to the cell outer membrane. It is found in the bacterial flagellum basal body. Its function is as follows. Assembles around the rod to form the L-ring and probably protects the motor/basal body from shearing forces during rotation. The protein is Flagellar L-ring protein 1 (flgH1) of Yersinia pseudotuberculosis serotype I (strain IP32953).